The chain runs to 419 residues: Histidine--tRNA ligase (419 aa).

The protein belongs to the class-II aminoacyl-tRNA synthetase family. As to quaternary structure, homodimer.

It is found in the cytoplasm. The catalysed reaction is tRNA(His) + L-histidine + ATP = L-histidyl-tRNA(His) + AMP + diphosphate + H(+). The protein is Histidine--tRNA ligase of Methylobacillus flagellatus (strain ATCC 51484 / DSM 6875 / VKM B-1610 / KT).